Reading from the N-terminus, the 341-residue chain is Endoglucanase 1 (341 aa).

Residues 1–16 form the signal peptide; the sequence is MKTATLLAALSVLAGA. The propeptide occupies 17 to 30; the sequence is LAAPLAGDSALHRR. Glu166 (proton donor) is an active-site residue. The Nucleophile role is filled by Glu275.

Belongs to the glycosyl hydrolase 5 (cellulase A) family.

The catalysed reaction is Endohydrolysis of (1-&gt;4)-beta-D-glucosidic linkages in cellulose, lichenin and cereal beta-D-glucans.. Its function is as follows. Has endoglucanase activity on carboxymethyl-cellulose (CMC). The polypeptide is Endoglucanase 1 (CMC1) (Saitozyma flava (Cryptococcus flavus)).